The primary structure comprises 236 residues: Regulatory protein cys-3 (236 aa).

Residues 26-89 are disordered; that stretch reads TLGQLQPIQP…MSVPPTPGAR (64 aa). Residues 28–37 show a composition bias toward polar residues; sequence GQLQPIQPNP. The 64-residue stretch at 99–162 folds into the bZIP domain; the sequence is LAAEEDKRKR…KWLKGLVTEK (64 aa). The segment at 105–137 is basic motif; it reads KRKRNTAASARFRIKKKQREQALEKSAKEMSEK. Positions 141 to 155 are leucine-zipper; it reads LEGRIQALETENKWL. A disordered region spans residues 189 to 236; the sequence is AAAADKAEAAADKADAERAREESSFCVSTSSPSSDESVDTDNKKRRKD. The segment covering 193–211 has biased composition (basic and acidic residues); it reads DKAEAAADKADAERAREES. A compositionally biased stretch (low complexity) spans 212–223; the sequence is SFCVSTSSPSSD.

It belongs to the bZIP family. GCN4 subfamily. In terms of assembly, binds DNA as a dimer.

The protein localises to the nucleus. Turns on the expression of structural genes which encode sulfur-catabolic enzymes. Binds to sequence elements upstream of these genes. The chain is Regulatory protein cys-3 (cys-3) from Neurospora crassa (strain ATCC 24698 / 74-OR23-1A / CBS 708.71 / DSM 1257 / FGSC 987).